A 1273-amino-acid chain; its full sequence is Ras-specific guanine nucleotide-releasing factor 1 (1273 aa).

The PH 1 domain maps to D22 to Y129. An IQ domain is found at K204–Y229. Residues K240–E426 enclose the DH domain. Positions P467–D584 constitute a PH 2 domain. Phosphoserine; by PLK2 is present on residues S577 and S626. In terms of domain architecture, N-terminal Ras-GEF spans K644–I761. Positions Y724 to R754 are disordered. S758 is modified (phosphoserine). Phosphoserine; by PLK2 occurs at positions 779 and 800. A disordered region spans residues T809–S874. The segment covering S842 to T854 has biased composition (acidic residues). Residues E855–S867 show a composition bias toward low complexity. The Ras-GEF domain occupies S1038 to K1270.

In terms of assembly, homooligomer and heterooligomer with RASGRF2. Interacts with USP8, thereby regulating its stability. Post-translationally, phosphorylated by PLK2, leading to ubiquitination and degradation by the proteasome. Ubiquitinated and degraded following phosphorylation by PLK2. In terms of processing, phosphorylated by SRC and LCK. Phosphorylation by LCK increases its capacity to stimulate the GDP/GTP exchange on Ras, whereas its phosphorylation by SRC seems not to have an effect on stimulation activity.

Its function is as follows. Promotes the exchange of Ras-bound GDP by GTP. The sequence is that of Ras-specific guanine nucleotide-releasing factor 1 (RASGRF1) from Homo sapiens (Human).